A 178-amino-acid chain; its full sequence is Large ribosomal subunit protein uL6 (178 aa).

The protein belongs to the universal ribosomal protein uL6 family. In terms of assembly, part of the 50S ribosomal subunit.

Functionally, this protein binds to the 23S rRNA, and is important in its secondary structure. It is located near the subunit interface in the base of the L7/L12 stalk, and near the tRNA binding site of the peptidyltransferase center. This is Large ribosomal subunit protein uL6 from Streptococcus pneumoniae (strain 70585).